We begin with the raw amino-acid sequence, 284 residues long: MGEIIDGKKLAKEIQEKVTREVAELVKEGKKPGLAVVLVGDNQASRTYVRNKQKRTEEAGMKSVLIELPENVTEEKLLSVVEELNEDKTIHGILVQLPLPEHISEEKVIDTISYDKDVDGFHPVNVGNLFIGKDSFVPCTPAGIIELIKSTGTQIEGKRAVVIGRSNIVGKPVAQLLLNENATVTIAHSRTKDLPQVAKEADILVVATGLAKFVKKDYIKPGAIVIDVGMDRDENNKLCGDVDFDDVVEEAGFITPVPGGVGPMTITMLLANTLKAAKRIWKMN.

Residues 164–166 (GRS) and S189 contribute to the NADP(+) site.

Belongs to the tetrahydrofolate dehydrogenase/cyclohydrolase family. In terms of assembly, homodimer.

The enzyme catalyses (6R)-5,10-methylene-5,6,7,8-tetrahydrofolate + NADP(+) = (6R)-5,10-methenyltetrahydrofolate + NADPH. The catalysed reaction is (6R)-5,10-methenyltetrahydrofolate + H2O = (6R)-10-formyltetrahydrofolate + H(+). The protein operates within one-carbon metabolism; tetrahydrofolate interconversion. In terms of biological role, catalyzes the oxidation of 5,10-methylenetetrahydrofolate to 5,10-methenyltetrahydrofolate and then the hydrolysis of 5,10-methenyltetrahydrofolate to 10-formyltetrahydrofolate. The sequence is that of Bifunctional protein FolD from Listeria monocytogenes serotype 4a (strain HCC23).